The primary structure comprises 421 residues: UDP-N-acetylglucosamine 1-carboxyvinyltransferase (421 aa).

Residue 22–23 participates in phosphoenolpyruvate binding; that stretch reads KN. Arg-93 is a UDP-N-acetyl-alpha-D-glucosamine binding site. Catalysis depends on Cys-117, which acts as the Proton donor. Position 117 is a 2-(S-cysteinyl)pyruvic acid O-phosphothioketal (Cys-117). UDP-N-acetyl-alpha-D-glucosamine contacts are provided by residues 122 to 126, Asp-308, and Val-330; that span reads RPVDL.

This sequence belongs to the EPSP synthase family. MurA subfamily.

The protein localises to the cytoplasm. The enzyme catalyses phosphoenolpyruvate + UDP-N-acetyl-alpha-D-glucosamine = UDP-N-acetyl-3-O-(1-carboxyvinyl)-alpha-D-glucosamine + phosphate. It functions in the pathway cell wall biogenesis; peptidoglycan biosynthesis. In terms of biological role, cell wall formation. Adds enolpyruvyl to UDP-N-acetylglucosamine. This is UDP-N-acetylglucosamine 1-carboxyvinyltransferase from Azotobacter vinelandii (strain DJ / ATCC BAA-1303).